A 119-amino-acid chain; its full sequence is Glucitol operon activator protein (119 aa).

Residues 23 to 29 constitute a DNA-binding region (H-T-H motif); that stretch reads QISRFNR.

Its function is as follows. Positive regulator for glucitol operon expression. The sequence is that of Glucitol operon activator protein (gutM) from Escherichia coli (strain K12).